A 189-amino-acid polypeptide reads, in one-letter code: Interleukin-23 subunit alpha (189 aa).

The first 19 residues, 1–19, serve as a signal peptide directing secretion; that stretch reads MLGSTAVMLLLLLPWTAQT.

Belongs to the IL-6 superfamily. Heterodimer with IL12B; disulfide-linked. The heterodimer is known as interleukin IL-23. Interacts with IL23R; this interaction enables recruitment of IL12RB1.

The protein localises to the secreted. Its function is as follows. Associates with IL12B to form the pro-inflammatory cytokine IL-23 that plays different roles in innate and adaptive immunity. Released by antigen-presenting cells such as dendritic cells or macrophages, binds to a heterodimeric receptor complex composed of IL12RB1 and IL23R to activate JAK2 and TYK2 which then phosphorylate the receptor to form a docking site leading to the phosphorylation of STAT3 and STAT4. This process leads to activation of several pathways including p38 MAPK or NF-kappa-B and promotes the production of pro-inflammatory cytokines such as interleukin-17A/IL17A. In turn, participates in the early and effective intracellular bacterial clearance. Promotes the expansion and survival of T-helper 17 cells, a CD4-positive helper T-cell subset that produces IL-17, as well as other IL-17-producing cells. The polypeptide is Interleukin-23 subunit alpha (IL23A) (Cavia porcellus (Guinea pig)).